Reading from the N-terminus, the 427-residue chain is 3-phosphoshikimate 1-carboxyvinyltransferase (427 aa).

K22, S23, and R27 together coordinate 3-phosphoshikimate. K22 provides a ligand contact to phosphoenolpyruvate. Residues G96 and R124 each contribute to the phosphoenolpyruvate site. 7 residues coordinate 3-phosphoshikimate: S169, S170, Q171, S197, D313, N336, and K340. Q171 serves as a coordination point for phosphoenolpyruvate. D313 serves as the catalytic Proton acceptor. The phosphoenolpyruvate site is built by R344, R386, and K411.

It belongs to the EPSP synthase family. In terms of assembly, monomer.

The protein localises to the cytoplasm. It carries out the reaction 3-phosphoshikimate + phosphoenolpyruvate = 5-O-(1-carboxyvinyl)-3-phosphoshikimate + phosphate. It functions in the pathway metabolic intermediate biosynthesis; chorismate biosynthesis; chorismate from D-erythrose 4-phosphate and phosphoenolpyruvate: step 6/7. Functionally, catalyzes the transfer of the enolpyruvyl moiety of phosphoenolpyruvate (PEP) to the 5-hydroxyl of shikimate-3-phosphate (S3P) to produce enolpyruvyl shikimate-3-phosphate and inorganic phosphate. The protein is 3-phosphoshikimate 1-carboxyvinyltransferase of Salmonella dublin (strain CT_02021853).